A 294-amino-acid chain; its full sequence is Probable 2-(5''-triphosphoribosyl)-3'-dephosphocoenzyme-A synthase (294 aa).

This sequence belongs to the CitG/MdcB family.

It catalyses the reaction 3'-dephospho-CoA + ATP = 2'-(5''-triphospho-alpha-D-ribosyl)-3'-dephospho-CoA + adenine. This chain is Probable 2-(5''-triphosphoribosyl)-3'-dephosphocoenzyme-A synthase, found in Streptococcus pyogenes serotype M2 (strain MGAS10270).